The chain runs to 248 residues: 3-deoxy-manno-octulosonate cytidylyltransferase (248 aa).

The protein belongs to the KdsB family.

Its subcellular location is the cytoplasm. The enzyme catalyses 3-deoxy-alpha-D-manno-oct-2-ulosonate + CTP = CMP-3-deoxy-beta-D-manno-octulosonate + diphosphate. It participates in nucleotide-sugar biosynthesis; CMP-3-deoxy-D-manno-octulosonate biosynthesis; CMP-3-deoxy-D-manno-octulosonate from 3-deoxy-D-manno-octulosonate and CTP: step 1/1. It functions in the pathway bacterial outer membrane biogenesis; lipopolysaccharide biosynthesis. Activates KDO (a required 8-carbon sugar) for incorporation into bacterial lipopolysaccharide in Gram-negative bacteria. This chain is 3-deoxy-manno-octulosonate cytidylyltransferase, found in Salmonella paratyphi A (strain ATCC 9150 / SARB42).